We begin with the raw amino-acid sequence, 844 residues long: DNA mismatch repair protein MutS (844 aa).

602–609 (GPNMSGKS) is a binding site for ATP.

This sequence belongs to the DNA mismatch repair MutS family.

Its function is as follows. This protein is involved in the repair of mismatches in DNA. It is possible that it carries out the mismatch recognition step. This protein has a weak ATPase activity. The polypeptide is DNA mismatch repair protein MutS (Streptococcus pneumoniae (strain Hungary19A-6)).